The sequence spans 155 residues: Protein U1 (155 aa).

The protein belongs to the nanovirus U1 protein family.

The protein is Protein U1 (DNA-U1) of Cicer arietinum (Chickpea).